The chain runs to 240 residues: Manganese transport system ATP-binding protein MntB (240 aa).

One can recognise an ABC transporter domain in the interval 1-233; it reads MEIQGLTIAY…KIQFAYGDAP (233 aa). 33 to 40 contacts ATP; sequence GPNGAGKS.

It belongs to the ABC transporter superfamily.

The protein localises to the cell membrane. Functionally, this protein is probably a component of a manganese permease, a binding protein-dependent, ATP-driven transport system. Probably responsible for energy coupling to the transport system. The protein is Manganese transport system ATP-binding protein MntB (mntB) of Listeria monocytogenes serovar 1/2a (strain ATCC BAA-679 / EGD-e).